A 429-amino-acid polypeptide reads, in one-letter code: Proton extrusion protein PxcA (429 aa).

The tract at residues 139–161 (LNGPEAPQTNGDRPDNKPKVETV) is disordered. A compositionally biased stretch (basic and acidic residues) spans 150-161 (DRPDNKPKVETV). A run of 4 helical transmembrane segments spans residues 211–231 (FLLT…IAIT), 306–326 (AYEN…ILLI), 353–373 (LIIL…WEII), and 389–409 (FNFL…KYWI).

The protein belongs to the CemA family.

The protein resides in the cell inner membrane. Functionally, required for H(+) efflux immediately after light irradiation to form a rapid H(+) concentration gradient across the thylakoid membranes. Together with PxcL, contributes to transient H(+) uptake following dark to light transition. This Picosynechococcus sp. (strain ATCC 27264 / PCC 7002 / PR-6) (Agmenellum quadruplicatum) protein is Proton extrusion protein PxcA.